Consider the following 336-residue polypeptide: Tetraacyldisaccharide 4'-kinase (336 aa).

60-67 (TVGGTGKT) is an ATP binding site.

This sequence belongs to the LpxK family.

The enzyme catalyses a lipid A disaccharide + ATP = a lipid IVA + ADP + H(+). The protein operates within glycolipid biosynthesis; lipid IV(A) biosynthesis; lipid IV(A) from (3R)-3-hydroxytetradecanoyl-[acyl-carrier-protein] and UDP-N-acetyl-alpha-D-glucosamine: step 6/6. Functionally, transfers the gamma-phosphate of ATP to the 4'-position of a tetraacyldisaccharide 1-phosphate intermediate (termed DS-1-P) to form tetraacyldisaccharide 1,4'-bis-phosphate (lipid IVA). This chain is Tetraacyldisaccharide 4'-kinase, found in Pseudomonas entomophila (strain L48).